We begin with the raw amino-acid sequence, 276 residues long: 1H-3-hydroxy-4-oxoquinaldine 2,4-dioxygenase (276 aa).

In terms of domain architecture, AB hydrolase-1 spans 28–150 (PAILLLPGWC…TLLKDPERWR (123 aa)). Residues 36–38 (WCH), 100–101 (HS), and tryptophan 160 contribute to the substrate site. The active-site Proton donor/acceptor is the histidine 251.

The protein belongs to the AB hydrolase superfamily. None. Contrary to most other dioxygenases, this enzyme does not require a cofactor for catalysis. is required as a cofactor.

The catalysed reaction is 3-hydroxy-2-methyl-1H-quinolin-4-one + O2 = N-acetylanthranilate + CO + H(+). Its function is as follows. Ring-cleaving dioxygenase involved in quinaldine degradation and utilization. The polypeptide is 1H-3-hydroxy-4-oxoquinaldine 2,4-dioxygenase (hod) (Paenarthrobacter nitroguajacolicus (Arthrobacter nitroguajacolicus)).